The following is a 274-amino-acid chain: Trehalose transport system permease protein SugB (274 aa).

Helical transmembrane passes span 8-28, 70-90, 102-122, 137-157, 182-202, and 239-259; these read YWAV…LWIF, IGIG…AAYA, LIGA…TPLF, LILP…SAFF, VIVP…FIFA, and GSIA…VLIF. The ABC transmembrane type-1 domain occupies 66 to 259; that stretch reads LINSIGIGLI…IPIIVFVLIF (194 aa).

Belongs to the binding-protein-dependent transport system permease family. In terms of assembly, the complex is composed of two ATP-binding proteins (SugC), two transmembrane proteins (Suga and SugB) and a solute-binding protein (LpqY).

The protein localises to the cell inner membrane. In terms of biological role, part of the ABC transporter complex LpqY-SugA-SugB-SugC, which is highly specific for uptake of trehalose. Involved in the recycling of extracellular trehalose released from trehalose-containing molecules synthesized by M.tuberculosis. Trehalose uptake is essential for virulence. Probably responsible for the translocation of the substrate across the membrane. This Mycobacterium tuberculosis (strain CDC 1551 / Oshkosh) protein is Trehalose transport system permease protein SugB (sugB).